Here is a 196-residue protein sequence, read N- to C-terminus: UMP-CMP kinase (196 aa).

Residue 13–18 (GAGKGT) coordinates ATP. The residue at position 33 (S33) is a Phosphoserine. Residues 33–63 (SAGELLRDERKNPDSQYGELIEKYIKEGKIV) form an NMP region. A ribonucleoside 5'-phosphate is bound at residue R39. N6-acetyllysine occurs at positions 43 and 55. 61–63 (KIV) provides a ligand contact to a ribonucleoside 5'-phosphate. K73 participates in a covalent cross-link: Glycyl lysine isopeptide (Lys-Gly) (interchain with G-Cter in SUMO2). Position 93 to 96 (93 to 96 (GFPR)) interacts with a ribonucleoside 5'-phosphate. N100 contributes to the CMP binding site. The residue at position 106 (K106) is an N6-succinyllysine. Positions 133–143 (ERGKSSGRSDD) are LID. R134 provides a ligand contact to ATP. The a ribonucleoside 5'-phosphate site is built by R140 and R151. K179 is an ATP binding site. At S180 the chain carries Phosphoserine.

Belongs to the adenylate kinase family. UMP-CMP kinase subfamily. Monomer. Mg(2+) is required as a cofactor.

It is found in the nucleus. It localises to the cytoplasm. It carries out the reaction CMP + ATP = CDP + ADP. The catalysed reaction is dCMP + ATP = dCDP + ADP. It catalyses the reaction UMP + ATP = UDP + ADP. The enzyme catalyses a 2'-deoxyribonucleoside 5'-diphosphate + ATP = a 2'-deoxyribonucleoside 5'-triphosphate + ADP. It carries out the reaction a ribonucleoside 5'-diphosphate + ATP = a ribonucleoside 5'-triphosphate + ADP. Catalyzes the phosphorylation of pyrimidine nucleoside monophosphates at the expense of ATP. Plays an important role in de novo pyrimidine nucleotide biosynthesis. Has preference for UMP and CMP as phosphate acceptors. Also displays broad nucleoside diphosphate kinase activity. The sequence is that of UMP-CMP kinase (Cmpk1) from Rattus norvegicus (Rat).